The chain runs to 243 residues: Ribosomal RNA small subunit methyltransferase G (243 aa).

Residues Gly-80, Phe-85, 132–133 (IE), and Arg-151 contribute to the S-adenosyl-L-methionine site.

The protein belongs to the methyltransferase superfamily. RNA methyltransferase RsmG family.

It is found in the cytoplasm. Specifically methylates the N7 position of a guanine in 16S rRNA. The chain is Ribosomal RNA small subunit methyltransferase G from Synechococcus sp. (strain CC9902).